Here is a 130-residue protein sequence, read N- to C-terminus: Large-conductance mechanosensitive channel (130 aa).

Transmembrane regions (helical) follow at residues 11 to 31 and 70 to 90; these read FALK…AAFG and GAFI…FIFV.

It belongs to the MscL family. Homopentamer.

The protein localises to the cell membrane. In terms of biological role, channel that opens in response to stretch forces in the membrane lipid bilayer. May participate in the regulation of osmotic pressure changes within the cell. In Listeria welshimeri serovar 6b (strain ATCC 35897 / DSM 20650 / CCUG 15529 / CIP 8149 / NCTC 11857 / SLCC 5334 / V8), this protein is Large-conductance mechanosensitive channel.